Consider the following 383-residue polypeptide: Acetylornithine deacetylase (383 aa).

His-80 contributes to the Zn(2+) binding site. Asp-82 is an active-site residue. Asp-112 contributes to the Zn(2+) binding site. Glu-144 is a catalytic residue. Residues Glu-145, Glu-169, and His-355 each contribute to the Zn(2+) site.

This sequence belongs to the peptidase M20A family. ArgE subfamily. As to quaternary structure, homodimer. Zn(2+) serves as cofactor. Co(2+) is required as a cofactor. Requires glutathione as cofactor.

The protein resides in the cytoplasm. The catalysed reaction is N(2)-acetyl-L-ornithine + H2O = L-ornithine + acetate. The protein operates within amino-acid biosynthesis; L-arginine biosynthesis; L-ornithine from N(2)-acetyl-L-ornithine (linear): step 1/1. Its function is as follows. Catalyzes the hydrolysis of the amide bond of N(2)-acetylated L-amino acids. Cleaves the acetyl group from N-acetyl-L-ornithine to form L-ornithine, an intermediate in L-arginine biosynthesis pathway, and a branchpoint in the synthesis of polyamines. This Shigella sonnei (strain Ss046) protein is Acetylornithine deacetylase.